Reading from the N-terminus, the 971-residue chain is Reversion-inducing cysteine-rich protein with Kazal motifs (971 aa).

A signal peptide spans 1–22 (MATVRASLRGALLLLLAVAGVA). A Knot 1 repeat occupies 37–84 (CCNHSKDNQMCRDVCEQIFSSKSESRLKHLLQRAPDYCPETMVEIWNC). A 5 X Knot repeats region spans residues 37–338 (CCNHSKDNQM…NPVEVSMLTC (302 aa)). Asn39 and Asn86 each carry an N-linked (GlcNAc...) asparagine glycan. 2 Knot repeats span residues 104-141 (CCEL…LFSC) and 151-197 (CCSY…LIHC). N-linked (GlcNAc...) asparagine glycosylation is present at Asn200. 2 Knot repeats span residues 216 to 263 (CCDR…LWQC) and 292 to 338 (CCSK…MLTC). N-linked (GlcNAc...) asparagine glycans are attached at residues Asn297 and Asn352. Kazal-like domains are found at residues 627–673 (TFTG…SCMS), 698–752 (TFDK…PCQP), and 753–789 (FCRA…DCQA). Disulfide bonds link Cys633/Cys658, Cys635/Cys654, Cys643/Cys671, Cys716/Cys735, Cys724/Cys750, and Cys761/Cys787. Ser942 is lipidated: GPI-anchor amidated serine. The propeptide at 943–971 (AGVRARPSCHSLLLPLSLGLALHLLWTYN) is removed in mature form.

This sequence belongs to the RECK family. As to quaternary structure, interacts (via knot repeats) with WNT7A (via disordered linker region); the interaction is direct. Interacts (via knot repeats) with WNT7B (via disordered linker region); the interaction is direct. Interacts with ADGRA2; the interaction is direct. Interacts with MMP9. N-glycosylated. Expressed in various tissues and untransformed cells. It is undetectable in tumor-derived cell lines and oncogenically transformed cells.

Its subcellular location is the cell membrane. Its function is as follows. Functions together with ADGRA2 to enable brain endothelial cells to selectively respond to Wnt7 signals (WNT7A or WNT7B). Plays a key role in Wnt7-specific responses: required for central nervous system (CNS) angiogenesis and blood-brain barrier regulation. Acts as a Wnt7-specific coactivator of canonical Wnt signaling by decoding Wnt ligands: acts by interacting specifically with the disordered linker region of Wnt7, thereby conferring ligand selectivity for Wnt7. ADGRA2 is then required to deliver RECK-bound Wnt7 to frizzled by assembling a higher-order RECK-ADGRA2-Fzd-LRP5-LRP6 complex. Also acts as a serine protease inhibitor: negatively regulates matrix metalloproteinase-9 (MMP9) by suppressing MMP9 secretion and by direct inhibition of its enzymatic activity. Also inhibits metalloproteinase activity of MMP2 and MMP14 (MT1-MMP). This Homo sapiens (Human) protein is Reversion-inducing cysteine-rich protein with Kazal motifs.